Consider the following 343-residue polypeptide: Branched-chain-amino-acid aminotransferase (343 aa).

K182 is modified (N6-(pyridoxal phosphate)lysine).

It belongs to the class-IV pyridoxal-phosphate-dependent aminotransferase family. Pyridoxal 5'-phosphate is required as a cofactor.

The enzyme catalyses L-leucine + 2-oxoglutarate = 4-methyl-2-oxopentanoate + L-glutamate. It catalyses the reaction L-isoleucine + 2-oxoglutarate = (S)-3-methyl-2-oxopentanoate + L-glutamate. It carries out the reaction L-valine + 2-oxoglutarate = 3-methyl-2-oxobutanoate + L-glutamate. It participates in amino-acid biosynthesis; L-isoleucine biosynthesis; L-isoleucine from 2-oxobutanoate: step 4/4. It functions in the pathway amino-acid biosynthesis; L-leucine biosynthesis; L-leucine from 3-methyl-2-oxobutanoate: step 4/4. Its pathway is amino-acid biosynthesis; L-valine biosynthesis; L-valine from pyruvate: step 4/4. Functionally, acts on leucine, isoleucine and valine. The sequence is that of Branched-chain-amino-acid aminotransferase (ilvE) from Haemophilus influenzae (strain ATCC 51907 / DSM 11121 / KW20 / Rd).